The primary structure comprises 193 residues: Pyridoxal 5'-phosphate synthase subunit PdxT (193 aa).

50–52 serves as a coordination point for L-glutamine; it reads GES. Cysteine 82 functions as the Nucleophile in the catalytic mechanism. Residues arginine 109 and 136-137 each bind L-glutamine; that span reads IR. Active-site charge relay system residues include histidine 172 and glutamate 174.

The protein belongs to the glutaminase PdxT/SNO family. As to quaternary structure, in the presence of PdxS, forms a dodecamer of heterodimers. Only shows activity in the heterodimer.

It catalyses the reaction aldehydo-D-ribose 5-phosphate + D-glyceraldehyde 3-phosphate + L-glutamine = pyridoxal 5'-phosphate + L-glutamate + phosphate + 3 H2O + H(+). The catalysed reaction is L-glutamine + H2O = L-glutamate + NH4(+). The protein operates within cofactor biosynthesis; pyridoxal 5'-phosphate biosynthesis. Its function is as follows. Catalyzes the hydrolysis of glutamine to glutamate and ammonia as part of the biosynthesis of pyridoxal 5'-phosphate. The resulting ammonia molecule is channeled to the active site of PdxS. This is Pyridoxal 5'-phosphate synthase subunit PdxT from Streptococcus pneumoniae serotype 2 (strain D39 / NCTC 7466).